A 466-amino-acid chain; its full sequence is Glutamate decarboxylase alpha (466 aa).

Substrate-binding residues include T62 and N83. Residues 126–127, T212, and H275 each bind pyridoxal 5'-phosphate; that span reads SS. Position 276 is an N6-(pyridoxal phosphate)lysine (K276).

It belongs to the group II decarboxylase family. Homohexamer. Pyridoxal 5'-phosphate serves as cofactor.

It carries out the reaction L-glutamate + H(+) = 4-aminobutanoate + CO2. Converts glutamate to gamma-aminobutyrate (GABA), consuming one intracellular proton in the reaction. The gad system helps to maintain a near-neutral intracellular pH when cells are exposed to extremely acidic conditions. The ability to survive transit through the acidic conditions of the stomach is essential for successful colonization of the mammalian host by commensal and pathogenic bacteria. In Escherichia coli O6:H1 (strain CFT073 / ATCC 700928 / UPEC), this protein is Glutamate decarboxylase alpha (gadA).